A 256-amino-acid polypeptide reads, in one-letter code: CD209 antigen-like protein 2 (256 aa).

At 1-50 (MSDSKEPRAQPLGLLEEEELITSSMNFFPRDFGFRQTRGYKSLAGCLGHA) the chain is on the cytoplasmic side. The short motif at 14–15 (LL) is the Endocytosis signal element. A helical; Signal-anchor for type II membrane protein transmembrane segment spans residues 51 to 71 (PLVLPLLFFTLFTGLLVAILV). The Extracellular segment spans residues 72–240 (QVSKNPSSQR…KSAASCSRDE (169 aa)). 3 cysteine pairs are disulfide-bonded: cysteine 108/cysteine 119, cysteine 136/cysteine 229, and cysteine 208/cysteine 221. One can recognise a C-type lectin domain in the interval 114 to 230 (FFQGNCYFIS…CSAAKFWICK (117 aa)). The Ca(2+) site is built by glutamate 199, asparagine 201, isoleucine 203, glutamate 206, asparagine 217, and aspartate 218.

Predominantly expressed in liver and axillary lymph nodes. At very low levels also found in other tissues.

The protein resides in the membrane. Its function is as follows. Probable pathogen-recognition receptor involved in peripheral immune surveillance in liver. May mediate the endocytosis of pathogens which are subsequently degraded in lysosomal compartments. Probably recognizes in a calcium-dependent manner high mannose N-linked oligosaccharides in a variety of pathogen antigens. Is a receptor for ICAM3, probably by binding to mannose-like carbohydrates. This is CD209 antigen-like protein 2 (CD209L2) from Macaca mulatta (Rhesus macaque).